The following is a 422-amino-acid chain: Cytokine receptor-like factor 1 (422 aa).

The N-terminal stretch at 1 to 37 is a signal peptide; the sequence is MPAGRRGPAAQSARRPPPLLPLLLLLCVLGAPRAGSG. The 94-residue stretch at 38–131 folds into the Ig-like C2-type domain; it reads AHTAVISPQD…SILAGSCLYV (94 aa). N-linked (GlcNAc...) asparagine glycans are attached at residues N92, N104, and N140. 2 Fibronectin type-III domains span residues 137-232 and 237-341; these read KPVN…ILDV and PPPD…TPRS. C143 and C153 are joined by a disulfide. N-linked (GlcNAc...) asparagine glycosylation is present at N168. Residues C184 and C195 are joined by a disulfide bond. Residue S219 is modified to Phosphoserine. The N-linked (GlcNAc...) asparagine glycan is linked to N292. A WSXWS motif motif is present at residues 327–331; the sequence is WSEWS. The interval 332–363 is disordered; the sequence is HPTAASTPRSERPGPGGGACEPRGGEPSSGPV. N-linked (GlcNAc...) asparagine glycosylation occurs at N382. The disordered stretch occupies residues 399-422; that stretch reads HKTRNQDEGILPSGRRGTARGPAR.

Belongs to the type I cytokine receptor family. Type 3 subfamily. As to quaternary structure, forms covalent di- and tetramers. Forms a heteromeric complex with cardiotrophin-like cytokine CLCF1/CLC; the CRLF1-CLCF1 complex is a ligand for the ciliary neurotrophic factor receptor/CNTFR. The CRLF1-CLCF1 heterodimer binds SORL1 (via N-terminal ectodomain); within this complex, the interaction is mediated predominantly by the CRLF1 moiety. The tripartite signaling complex formed by CRLF1, CLCF1 and CNTFR also binds SORL1. In terms of tissue distribution, highest levels of expression observed in spleen, thymus, lymph node, appendix, bone marrow, stomach, placenta, heart, thyroid and ovary. Strongly expressed also in fetal lung.

It is found in the secreted. Functionally, in complex with CLCF1, forms a heterodimeric neurotropic cytokine that plays a crucial role during neuronal development. May also play a regulatory role in the immune system. In Homo sapiens (Human), this protein is Cytokine receptor-like factor 1 (CRLF1).